The sequence spans 350 residues: Flap endonuclease 1 (350 aa).

The segment at 1–101 (MGVNLRELIP…REVEERLRRK (101 aa)) is N-domain. Residues Asp-30, Asp-83, Glu-155, Glu-157, Asp-176, Asp-178, and Asp-239 each coordinate Mg(2+). An I-domain region spans residues 119–261 (EARKYAMMAA…TALRLVKSLG (143 aa)). The segment at 341-349 (RQSRLDMWF) is interaction with PCNA.

This sequence belongs to the XPG/RAD2 endonuclease family. FEN1 subfamily. In terms of assembly, interacts with PCNA. PCNA stimulates the nuclease activity without altering cleavage specificity. Requires Mg(2+) as cofactor.

Functionally, structure-specific nuclease with 5'-flap endonuclease and 5'-3' exonuclease activities involved in DNA replication and repair. During DNA replication, cleaves the 5'-overhanging flap structure that is generated by displacement synthesis when DNA polymerase encounters the 5'-end of a downstream Okazaki fragment. Binds the unpaired 3'-DNA end and kinks the DNA to facilitate 5' cleavage specificity. Cleaves one nucleotide into the double-stranded DNA from the junction in flap DNA, leaving a nick for ligation. Also involved in the base excision repair (BER) pathway. Acts as a genome stabilization factor that prevents flaps from equilibrating into structures that lead to duplications and deletions. Also possesses 5'-3' exonuclease activity on nicked or gapped double-stranded DNA. The protein is Flap endonuclease 1 of Aeropyrum pernix (strain ATCC 700893 / DSM 11879 / JCM 9820 / NBRC 100138 / K1).